We begin with the raw amino-acid sequence, 59 residues long: Cuticle protein 7 isoform a (59 aa).

Pyrrolidone carboxylic acid is present on Gln1.

The protein is Cuticle protein 7 isoform a of Limulus polyphemus (Atlantic horseshoe crab).